Here is a 263-residue protein sequence, read N- to C-terminus: Hydroxyethylthiazole kinase 1 (263 aa).

Met42 contacts substrate. Lys118 and Thr164 together coordinate ATP. Gly191 is a binding site for substrate.

The protein belongs to the Thz kinase family. Mg(2+) is required as a cofactor.

The catalysed reaction is 5-(2-hydroxyethyl)-4-methylthiazole + ATP = 4-methyl-5-(2-phosphooxyethyl)-thiazole + ADP + H(+). The protein operates within cofactor biosynthesis; thiamine diphosphate biosynthesis; 4-methyl-5-(2-phosphoethyl)-thiazole from 5-(2-hydroxyethyl)-4-methylthiazole: step 1/1. Its function is as follows. Catalyzes the phosphorylation of the hydroxyl group of 4-methyl-5-beta-hydroxyethylthiazole (THZ). This chain is Hydroxyethylthiazole kinase 1, found in Clostridium botulinum (strain 657 / Type Ba4).